The sequence spans 208 residues: Large ribosomal subunit protein bL25 (208 aa).

Acidic residues predominate over residues 185 to 195; it reads DLEEETGEAEG. Residues 185 to 208 form a disordered region; sequence DLEEETGEAEGETAAAPAEEGAES. The span at 196-208 shows a compositional bias: low complexity; that stretch reads ETAAAPAEEGAES.

This sequence belongs to the bacterial ribosomal protein bL25 family. CTC subfamily. Part of the 50S ribosomal subunit; part of the 5S rRNA/L5/L18/L25 subcomplex. Contacts the 5S rRNA. Binds to the 5S rRNA independently of L5 and L18.

Functionally, this is one of the proteins that binds to the 5S RNA in the ribosome where it forms part of the central protuberance. The sequence is that of Large ribosomal subunit protein bL25 from Rhodococcus opacus (strain B4).